We begin with the raw amino-acid sequence, 274 residues long: UPF0173 metal-dependent hydrolase Adeh_1068 (274 aa).

Belongs to the UPF0173 family.

In Anaeromyxobacter dehalogenans (strain 2CP-C), this protein is UPF0173 metal-dependent hydrolase Adeh_1068.